A 298-amino-acid polypeptide reads, in one-letter code: Probable phosphoserine phosphatase (298 aa).

The Nucleophile role is filled by Asp-82. 2 residues coordinate Mg(2+): Asp-82 and Asp-84. Residue Asp-84 is the Proton donor of the active site. Residues Glu-91, Arg-127, 170-171, and Lys-217 contribute to the substrate site; that span reads SG. Asp-240 lines the Mg(2+) pocket. Asn-243 is a binding site for substrate.

This sequence belongs to the HAD-like hydrolase superfamily. SerB family. It depends on Mg(2+) as a cofactor.

It carries out the reaction O-phospho-L-serine + H2O = L-serine + phosphate. The enzyme catalyses O-phospho-D-serine + H2O = D-serine + phosphate. Its pathway is amino-acid biosynthesis; L-serine biosynthesis; L-serine from 3-phospho-D-glycerate: step 3/3. The sequence is that of Probable phosphoserine phosphatase from Schizosaccharomyces pombe (strain 972 / ATCC 24843) (Fission yeast).